A 496-amino-acid polypeptide reads, in one-letter code: Membrane-bound lytic murein transglycosylase F (496 aa).

The first 31 residues, 1-31, serve as a signal peptide directing secretion; sequence MPIFSTRVLTYLRCIFRLFIGLTLLLTLVGC. A non-LT domain region spans residues 32–271; that stretch reads DFYTPSSQLE…KLDEKYFGHV (240 aa). The segment at 273 to 496 is LT domain; that stretch reads NFDFVDTRTF…AEVVKQITLR (224 aa). The active site involves E316. The tract at residues 464 to 486 is disordered; that stretch reads HRREELDDDDSSEPPSAERPTVI.

It in the N-terminal section; belongs to the bacterial solute-binding protein 3 family. In the C-terminal section; belongs to the transglycosylase Slt family.

It localises to the cell outer membrane. It carries out the reaction Exolytic cleavage of the (1-&gt;4)-beta-glycosidic linkage between N-acetylmuramic acid (MurNAc) and N-acetylglucosamine (GlcNAc) residues in peptidoglycan, from either the reducing or the non-reducing ends of the peptidoglycan chains, with concomitant formation of a 1,6-anhydrobond in the MurNAc residue.. Functionally, murein-degrading enzyme that degrades murein glycan strands and insoluble, high-molecular weight murein sacculi, with the concomitant formation of a 1,6-anhydromuramoyl product. Lytic transglycosylases (LTs) play an integral role in the metabolism of the peptidoglycan (PG) sacculus. Their lytic action creates space within the PG sacculus to allow for its expansion as well as for the insertion of various structures such as secretion systems and flagella. The chain is Membrane-bound lytic murein transglycosylase F from Aeromonas hydrophila subsp. hydrophila (strain ATCC 7966 / DSM 30187 / BCRC 13018 / CCUG 14551 / JCM 1027 / KCTC 2358 / NCIMB 9240 / NCTC 8049).